The primary structure comprises 204 residues: MIGWLQGRVLYKQNDQLLINVCGVGYELTVPQSVMASAQVGEELTVFVHHVQREDGQFLYGFSSFLQRQLFRELIRVSGIGPKLSIVILSGLTPEALIAAVRAQESAPFLRLSGIGKKTAERLLIELHDRVEKNDLFLCDESESSRAPIALSASEEAIQALIALELAPAEAELWVKKAQKTLAEDADSAALIKTAFALRLQGAK.

Residues 1 to 63 (MIGWLQGRVL…EDGQFLYGFS (63 aa)) are domain I. The interval 64–142 (SFLQRQLFRE…KNDLFLCDES (79 aa)) is domain II. The segment at 143–152 (ESSRAPIALS) is flexible linker. The domain III stretch occupies residues 152 to 204 (SASEEAIQALIALELAPAEAELWVKKAQKTLAEDADSAALIKTAFALRLQGAK).

Belongs to the RuvA family. Homotetramer. Forms an RuvA(8)-RuvB(12)-Holliday junction (HJ) complex. HJ DNA is sandwiched between 2 RuvA tetramers; dsDNA enters through RuvA and exits via RuvB. An RuvB hexamer assembles on each DNA strand where it exits the tetramer. Each RuvB hexamer is contacted by two RuvA subunits (via domain III) on 2 adjacent RuvB subunits; this complex drives branch migration. In the full resolvosome a probable DNA-RuvA(4)-RuvB(12)-RuvC(2) complex forms which resolves the HJ.

The protein resides in the cytoplasm. Its function is as follows. The RuvA-RuvB-RuvC complex processes Holliday junction (HJ) DNA during genetic recombination and DNA repair, while the RuvA-RuvB complex plays an important role in the rescue of blocked DNA replication forks via replication fork reversal (RFR). RuvA specifically binds to HJ cruciform DNA, conferring on it an open structure. The RuvB hexamer acts as an ATP-dependent pump, pulling dsDNA into and through the RuvAB complex. HJ branch migration allows RuvC to scan DNA until it finds its consensus sequence, where it cleaves and resolves the cruciform DNA. The protein is Holliday junction branch migration complex subunit RuvA of Dichelobacter nodosus (strain VCS1703A).